The sequence spans 112 residues: Secretoglobin family 2B member 20 (112 aa).

The signal sequence occupies residues 1-23; that stretch reads MKGTLLLLGLLVTGELSFQTTEA. Asparagine 50 carries an N-linked (GlcNAc...) asparagine glycan.

This sequence belongs to the secretoglobin family. As to expression, expressed in lacrimal gland, at higher level in males than females. Expressed in the submandibular gland.

It localises to the secreted. The polypeptide is Secretoglobin family 2B member 20 (Scgb2b20) (Mus musculus (Mouse)).